The sequence spans 133 residues: Beta-synuclein (133 aa).

A run of 2 repeats spans residues 20-30 (EKTKQGVTEAA) and 31-41 (EKTKEGVLYVG). The tract at residues 20–66 (EKTKQGVTEAAEKTKEGVLYVGSKTSGVVQGVASVAEKTKEQASHLG) is 4 X 11 AA tandem repeats of [EGS]-K-T-K-[EQ]-[GQ]-V-X(4). The 3; approximate repeat unit spans residues 42 to 55 (SKTSGVVQGVASVA). Phosphoserine is present on serine 45. Copy 4 of the repeat occupies 56-66 (EKTKEQASHLG). The disordered stretch occupies residues 96 to 133 (EVAQEAAEEPLIEPLMEPEGESYEDSPQEEYQEYEPEA). A compositionally biased stretch (acidic residues) spans 97 to 133 (VAQEAAEEPLIEPLMEPEGESYEDSPQEEYQEYEPEA). Serine 117 bears the Phosphoserine; by BARK1, CK2 and GRK5 mark.

The protein belongs to the synuclein family. Post-translationally, phosphorylated. Phosphorylation by G-protein coupled receptor kinases (GRK) is more efficient than phosphorylation by CK1, CK2 and CaM-kinase II. Highly expressed in the brain.

The protein localises to the cytoplasm. May be involved in neuronal plasticity. The sequence is that of Beta-synuclein (Sncb) from Mus musculus (Mouse).